The following is a 174-amino-acid chain: 3-hydroxydecanoyl-[acyl-carrier-protein] dehydratase (174 aa).

The active site involves histidine 73.

It belongs to the thioester dehydratase family. FabA subfamily. As to quaternary structure, homodimer.

Its subcellular location is the cytoplasm. The enzyme catalyses a (3R)-hydroxyacyl-[ACP] = a (2E)-enoyl-[ACP] + H2O. The catalysed reaction is (3R)-hydroxydecanoyl-[ACP] = (2E)-decenoyl-[ACP] + H2O. It carries out the reaction (2E)-decenoyl-[ACP] = (3Z)-decenoyl-[ACP]. Its pathway is lipid metabolism; fatty acid biosynthesis. Necessary for the introduction of cis unsaturation into fatty acids. Catalyzes the dehydration of (3R)-3-hydroxydecanoyl-ACP to E-(2)-decenoyl-ACP and then its isomerization to Z-(3)-decenoyl-ACP. Can catalyze the dehydratase reaction for beta-hydroxyacyl-ACPs with saturated chain lengths up to 16:0, being most active on intermediate chain length. This is 3-hydroxydecanoyl-[acyl-carrier-protein] dehydratase from Teredinibacter turnerae (strain ATCC 39867 / T7901).